Consider the following 638-residue polypeptide: LEAF RUST 10 DISEASE-RESISTANCE LOCUS RECEPTOR-LIKE PROTEIN KINASE-like 2.1 (638 aa).

The first 29 residues, 1–29, serve as a signal peptide directing secretion; the sequence is MINLSLYQTNSLSYTIIWMLFVIPSCVLS. Topologically, residues 30-264 are extracellular; sequence VDERQKHCSP…EHTCGKMGIG (235 aa). Asn69, Asn114, Asn136, Asn204, and Asn239 each carry an N-linked (GlcNAc...) asparagine glycan. The chain crosses the membrane as a helical span at residues 265-285; it reads IGLGCGFLGATLITVCLLCFF. The Cytoplasmic segment spans residues 286–638; the sequence is FQKRRTSHHL…YTEVFIGSTS (353 aa). The Protein kinase domain occupies 321-609; it reads KLFSHTLGKG…VLEVPPKPSI (289 aa). ATP-binding positions include 327 to 335 and Lys349; that span reads LGKGGFGTV. A Phosphotyrosine modification is found at Tyr393. Residue Asp444 is the Proton acceptor of the active site. Residue Thr484 is modified to Phosphothreonine.

It belongs to the protein kinase superfamily. Ser/Thr protein kinase family.

It is found in the membrane. It carries out the reaction L-seryl-[protein] + ATP = O-phospho-L-seryl-[protein] + ADP + H(+). The catalysed reaction is L-threonyl-[protein] + ATP = O-phospho-L-threonyl-[protein] + ADP + H(+). The polypeptide is LEAF RUST 10 DISEASE-RESISTANCE LOCUS RECEPTOR-LIKE PROTEIN KINASE-like 2.1 (Arabidopsis thaliana (Mouse-ear cress)).